A 106-amino-acid polypeptide reads, in one-letter code: Large ribosomal subunit protein uL24 (106 aa).

This sequence belongs to the universal ribosomal protein uL24 family. In terms of assembly, part of the 50S ribosomal subunit.

One of two assembly initiator proteins, it binds directly to the 5'-end of the 23S rRNA, where it nucleates assembly of the 50S subunit. Functionally, one of the proteins that surrounds the polypeptide exit tunnel on the outside of the subunit. The protein is Large ribosomal subunit protein uL24 of Polaromonas sp. (strain JS666 / ATCC BAA-500).